A 626-amino-acid chain; its full sequence is Janus kinase and microtubule-interacting protein 1 (626 aa).

A mediates association with microtubules region spans residues 1 to 365; that stretch reads MSKKGRSKGE…KIKNLTRENV (365 aa). Coiled-coil stretches lie at residues 19-254 and 284-413; these read VQMA…REAE and ERDV…DDLS. The tract at residues 365–626 is mediates interaction with TYK2 and GABBR1; the sequence is VEMKEKLSAQ…ILFEPKLKFM (262 aa). At S382 the chain carries Phosphoserine. Positions 452–461 are enriched in polar residues; that stretch reads ETLSETSCNT. Residues 452–480 form a disordered region; the sequence is ETLSETSCNTDRTDRAPATPEEDLDDTTT. T470 bears the Phosphothreonine mark. A coiled-coil region spans residues 490–604; the sequence is QLTREYQALQ…EFRVLELEVR (115 aa).

It belongs to the JAKMIP family. In terms of assembly, homodimer. Forms a complex with GABBR1 and KIF5B/kinesin-1. Interacts with JAK1 and TYK2. In terms of processing, phosphorylated.

The protein localises to the cytoplasm. The protein resides in the cytoskeleton. It is found in the membrane. Associates with microtubules and may play a role in the microtubule-dependent transport of the GABA-B receptor. May play a role in JAK1 signaling and regulate microtubule cytoskeleton rearrangements. The protein is Janus kinase and microtubule-interacting protein 1 (JAKMIP1) of Bos taurus (Bovine).